Here is a 171-residue protein sequence, read N- to C-terminus: Tetratricopeptide repeat protein 9C (171 aa).

TPR repeat units lie at residues 8–41, 72–107, and 108–141; these read AQLY…LRGL, TDCY…QPDN, and AKAL…KPKD.

Belongs to the TTC9 family.

This is Tetratricopeptide repeat protein 9C (TTC9C) from Bos taurus (Bovine).